We begin with the raw amino-acid sequence, 174 residues long: MFNIISKKYTQALVDSGSNLDETLSILKGLSLALKDKRNADIIASPFLSKTQKEQFLLESVGKVDMKLQNFFRLLAQSDRILLIPYISDELERRLLARKKEYAATLTAKESLDTKTLEKIQDSLAKKLGVKLSIKQRLSEVDGIKLSVEDLGIEVSFSKERFSNDLKHHILKAL.

It belongs to the ATPase delta chain family. F-type ATPases have 2 components, F(1) - the catalytic core - and F(0) - the membrane proton channel. F(1) has five subunits: alpha(3), beta(3), gamma(1), delta(1), epsilon(1). F(0) has three main subunits: a(1), b(2) and c(10-14). The alpha and beta chains form an alternating ring which encloses part of the gamma chain. F(1) is attached to F(0) by a central stalk formed by the gamma and epsilon chains, while a peripheral stalk is formed by the delta and b chains.

The protein localises to the cell inner membrane. F(1)F(0) ATP synthase produces ATP from ADP in the presence of a proton or sodium gradient. F-type ATPases consist of two structural domains, F(1) containing the extramembraneous catalytic core and F(0) containing the membrane proton channel, linked together by a central stalk and a peripheral stalk. During catalysis, ATP synthesis in the catalytic domain of F(1) is coupled via a rotary mechanism of the central stalk subunits to proton translocation. Its function is as follows. This protein is part of the stalk that links CF(0) to CF(1). It either transmits conformational changes from CF(0) to CF(1) or is implicated in proton conduction. This Helicobacter hepaticus (strain ATCC 51449 / 3B1) protein is ATP synthase subunit delta.